A 175-amino-acid polypeptide reads, in one-letter code: MEQQRIEVVGKLGSTYGIRGWLRIYSSTEYAESIFDYQPWFLKIKGQWQPAELESWKHHNHELIAKLKNVDDRDAAQALTNVEIGVDLSVFPKLEEGDYYWHDLIGCQVVNLQGYTMGTVSEMMETGSNDVLVVRANVKDAFGKQERLIPFLYEKVVKRVDLTTKTIEVDWDAGF.

Residues 96-175 (EGDYYWHDLI…TIEVDWDAGF (80 aa)) enclose the PRC barrel domain.

The protein belongs to the RimM family. In terms of assembly, binds ribosomal protein uS19.

It localises to the cytoplasm. An accessory protein needed during the final step in the assembly of 30S ribosomal subunit, possibly for assembly of the head region. Essential for efficient processing of 16S rRNA. May be needed both before and after RbfA during the maturation of 16S rRNA. It has affinity for free ribosomal 30S subunits but not for 70S ribosomes. The polypeptide is Ribosome maturation factor RimM (Actinobacillus succinogenes (strain ATCC 55618 / DSM 22257 / CCUG 43843 / 130Z)).